Here is a 148-residue protein sequence, read N- to C-terminus: Lysozyme-like protein 2 (148 aa).

The first 19 residues, 1 to 19, serve as a signal peptide directing secretion; the sequence is MKAAGILTLIGCLVTGAES. Positions 20 to 148 constitute a C-type lysozyme domain; sequence KIYTRCKLAK…SDWKKDCEVS (129 aa). Disulfide bonds link cysteine 25–cysteine 145, cysteine 49–cysteine 133, cysteine 83–cysteine 98, and cysteine 94–cysteine 112. Glutamate 54 is a catalytic residue. Asparagine 58 carries N-linked (GlcNAc...) asparagine glycosylation. Residue aspartate 71 is part of the active site.

Belongs to the glycosyl hydrolase 22 family. As to quaternary structure, monomer. In terms of tissue distribution, expressed in testis, epididymis and placenta.

The protein resides in the secreted. The catalysed reaction is Hydrolysis of (1-&gt;4)-beta-linkages between N-acetylmuramic acid and N-acetyl-D-glucosamine residues in a peptidoglycan and between N-acetyl-D-glucosamine residues in chitodextrins.. The polypeptide is Lysozyme-like protein 2 (LYZL2) (Homo sapiens (Human)).